The chain runs to 260 residues: Phosphate import ATP-binding protein PstB 1 (260 aa).

Positions 13–255 (ISARDLNVHY…PQHPLTQGYI (243 aa)) constitute an ABC transporter domain. 45–52 (GPSGCGKS) is a binding site for ATP.

The protein belongs to the ABC transporter superfamily. Phosphate importer (TC 3.A.1.7) family. In terms of assembly, the complex is composed of two ATP-binding proteins (PstB), two transmembrane proteins (PstC and PstA) and a solute-binding protein (PstS).

The protein localises to the cell inner membrane. It catalyses the reaction phosphate(out) + ATP + H2O = ADP + 2 phosphate(in) + H(+). Part of the ABC transporter complex PstSACB involved in phosphate import. Responsible for energy coupling to the transport system. This Paramagnetospirillum magneticum (strain ATCC 700264 / AMB-1) (Magnetospirillum magneticum) protein is Phosphate import ATP-binding protein PstB 1.